A 372-amino-acid polypeptide reads, in one-letter code: E3 ubiquitin-protein ligase RNF34 (372 aa).

An FYVE-type zinc finger spans residues 56 to 107; the sequence is EGPNIVCKACGLSFSVFRKKHVCCDCKKDFCSVCSVLQENLRRCSTCHLLQE. The 20-residue stretch at 115-134 folds into the SAP 1 domain; sequence LMRLKVKDLRQYLILRNIPI. Phosphoserine is present on Ser169. The segment at 194–253 is disordered; sequence QGELMDGDQTSRSGVPAQVQSEITSANTEDDDDDDDEDDDDEEENAEDRNPGLSKERVRA. Polar residues predominate over residues 201–220; the sequence is DQTSRSGVPAQVQSEITSAN. Residues 221–239 show a composition bias toward acidic residues; sequence TEDDDDDDDEDDDDEEENA. Residues 240–252 are compositionally biased toward basic and acidic residues; sequence EDRNPGLSKERVR. Residues Ser254 and Ser256 each carry the phosphoserine modification. In terms of domain architecture, SAP 2 spans 264 to 278; that stretch reads VEGMSVRQLKEILAR. The RING-type zinc-finger motif lies at 325–360; it reads CRICMDAVIDCVLLECGHMVTCTKCGKRMSECPICR.

In terms of assembly, interacts with CASP8 and CASP10. Interacts (via RING-type zinc finger) with PPARGC1A. Interacts with NOD1. Interacts with p53/TP53; involved in p53/TP53 ubiquitination. Interacts (via RING-type zinc finger) with MDM2; the interaction stabilizes MDM2. In terms of processing, autoubiquitinated (in vitro). Proteolytically cleaved by caspases upon induction of apoptosis by TNF. Ubiquitous. Detected in heart, brain, liver, skeletal muscle, kidney, pancreas, spleen, thymus, prostate, testis, ovary, colon and leukocytes.

The protein localises to the cell membrane. It localises to the endomembrane system. The protein resides in the nucleus. It is found in the nucleus speckle. Its subcellular location is the cytoplasm. The protein localises to the cytosol. It carries out the reaction S-ubiquitinyl-[E2 ubiquitin-conjugating enzyme]-L-cysteine + [acceptor protein]-L-lysine = [E2 ubiquitin-conjugating enzyme]-L-cysteine + N(6)-ubiquitinyl-[acceptor protein]-L-lysine.. It functions in the pathway protein modification; protein ubiquitination. E3 ubiquitin-protein ligase that regulates several biological processes through the ubiquitin-mediated proteasomal degradation of various target proteins. Ubiquitinates the caspases CASP8 and CASP10, promoting their proteasomal degradation, to negatively regulate cell death downstream of death domain receptors in the extrinsic pathway of apoptosis. May mediate 'Lys-48'-linked polyubiquitination of RIPK1 and its subsequent proteasomal degradation thereby indirectly regulating the tumor necrosis factor-mediated signaling pathway. Negatively regulates p53/TP53 through its direct ubiquitination and targeting to proteasomal degradation. Indirectly, may also negatively regulate p53/TP53 through ubiquitination and degradation of SFN. Mediates PPARGC1A proteasomal degradation probably through ubiquitination thereby indirectly regulating the metabolism of brown fat cells. Possibly involved in innate immunity, through 'Lys-48'-linked polyubiquitination of NOD1 and its subsequent proteasomal degradation. This chain is E3 ubiquitin-protein ligase RNF34, found in Homo sapiens (Human).